A 2028-amino-acid chain; its full sequence is Transient receptor potential cation channel subfamily M member 6 (2028 aa).

Over 1 to 747 (MQVKKSWIEG…MWMGRLKMRK (747 aa)) the chain is Cytoplasmic. A disordered region spans residues 577-601 (QPYKSKEKPEDSQKSKKKSKERQSL). A compositionally biased stretch (basic and acidic residues) spans 580–590 (KSKEKPEDSQK). The chain crosses the membrane as a helical span at residues 748-768 (NSWLKIIISILLPPMILTLEF). At 769-847 (KSKAEMSHVP…YEFYSAPFVK (79 aa)) the chain is on the extracellular side. A helical transmembrane segment spans residues 848-868 (FWFYTMAYLAFLMLFTYTVLV). Residues 869 to 910 (EMQPQPSVHEWLVIIYIFTNAIEKVREICISEPSKFKQKVKM) are Cytoplasmic-facing. Residues 911 to 931 (WLSEYWNLMETVAIGLFAVGF) traverse the membrane as a helical segment. The Extracellular portion of the chain corresponds to 932 to 945 (GLRWGHPPLQTAGR). A helical membrane pass occupies residues 946-966 (LIYCIDIIFWFSRLMDFFAVN). The Cytoplasmic portion of the chain corresponds to 967–978 (QHAGPYVTMIAK). Residues 979–999 (MAANMFYIVIIMAIVLLSFGV) form a helical membrane-spanning segment. At 1000–1018 (ARKAILSPKEPPSWRLARD) the chain is on the extracellular side. The segment at residues 1019–1039 (IVFEPYWMMYGEVYASDIDVC) is an intramembrane region (pore-forming). Topologically, residues 1040–1053 (SNETSCPPGSFLTP) are extracellular. The chain crosses the membrane as a helical span at residues 1054–1074 (FLQAVYLFVQYIIMVNLLIAC). The Cytoplasmic segment spans residues 1075-2028 (FNNIYLDIKS…RSSLEDHTRL (954 aa)). 2 stretches are compositionally biased toward basic and acidic residues: residues 1313–1323 (KREASHVREEQ) and 1665–1677 (DHLRQPQENRDKT). Disordered stretches follow at residues 1313–1339 (KREASHVREEQEEREMEQRTTASGISH) and 1658–1694 (RHTTQASDHLRQPQENRDKTPTWNSGSTSLSRSFLTR). The span at 1682 to 1694 (SGSTSLSRSFLTR) shows a compositional bias: low complexity. A Phosphothreonine; by autocatalysis modification is found at Thr-1730. In terms of domain architecture, Alpha-type protein kinase spans 1756–1986 (TLDKSMSSWS…CCGKLRLPDL (231 aa)). Residues Gly-1783, Gly-1784, Leu-1785, Arg-1786, and Lys-1810 each coordinate ADP. Residue Thr-1857 is modified to Phosphothreonine; by autocatalysis. ADP is bound by residues Glu-1882 and Met-1885. Position 1915 (His-1915) interacts with Zn(2+). Asp-1929 (proton acceptor) is an active-site residue. Asp-1939 contacts ADP. Positions 1972, 1974, and 1978 each coordinate Zn(2+). The disordered stretch occupies residues 2009–2028 (TEELPERDKNRSSLEDHTRL). Basic and acidic residues predominate over residues 2012–2028 (LPERDKNRSSLEDHTRL).

The protein in the C-terminal section; belongs to the protein kinase superfamily. Alpha-type protein kinase family. ALPK subfamily. This sequence in the N-terminal section; belongs to the transient receptor (TC 1.A.4) family. LTrpC subfamily. TRPM6 sub-subfamily. As to quaternary structure, forms heteromers with TRPM7; TRPM6 increases the current amplitude of TRPM6/7 heteromers as compared to TRPM7 homomers. Interacts (via kinase domain) with RACK1. In terms of processing, autophosphorylated; autophosphorylation controls the protein kinase activity of TRPM6 towards their substrates. Autophosphorylation of Thr-1857 in the kinase domain is essential for the inhibitory effect of RACK1. Post-translationally, the C-terminus of TRPM6 is proteolytically cleaved in vivo, in a cell type-specific fashion, releasing the kinase module from the transmembrane domain. The cleaved kinase fragments are translocated to the nucleus to phosphorylate histones and regulate gene expression.

Its subcellular location is the cell membrane. The protein localises to the apical cell membrane. It is found in the nucleus. The catalysed reaction is L-seryl-[protein] + ATP = O-phospho-L-seryl-[protein] + ADP + H(+). The enzyme catalyses L-threonyl-[protein] + ATP = O-phospho-L-threonyl-[protein] + ADP + H(+). It catalyses the reaction Mg(2+)(in) = Mg(2+)(out). It carries out the reaction Ca(2+)(in) = Ca(2+)(out). The catalysed reaction is Zn(2+)(in) = Zn(2+)(out). With respect to regulation, strongly inhibited by intracellular Mg(2+); unlikely to be active at physiological levels of intracellular Mg(2+). In the heteromeric TRPM6-TRPM7 channels complexes, TRPM7 are able to offset the very high sensitivity of TRPM6 to cytosolic Mg(2+) to physiologically relevant concentrations, whereas TRPM6 relieve TRPM7 from the inhibitory action of Mg-ATP. Consequently, the association of TRPM6 with TRPM7 allow for high constitutive activity of TRPM6/7 in the presence of physiological levels of Mg(2+) and Mg-ATP. The kinase activity is controlled through the autophosphorylation of a serine/threonine-rich region located to the N-terminal of the catalytic domain. Functionally, bifunctional protein that combines an ion channel with an intrinsic kinase domain, enabling it to modulate cellular functions either by conducting ions through the pore or by phosphorylating downstream proteins via its kinase domain. Crucial for Mg(2+) homeostasis. Has an important role in epithelial magnesium transport and in the active Mg(2+) absorption in the gut and kidney. However, whether TRPM6 forms functional homomeric channels by itself or functions primarily as a subunit of heteromeric TRPM6-TRPM7 channels, is still under debate. Its function is as follows. The C-terminal kinase domain can be cleaved from the channel segment in a cell-type-specific fashion. The cleaved kinase fragments can translocate to the nucleus, and bind chromatin-remodeling complex proteins to ultimately phosphorylate specific Ser/Thr residues of histones known to be functionally important for cell differentiation and development. The sequence is that of Transient receptor potential cation channel subfamily M member 6 (Trpm6) from Mus musculus (Mouse).